We begin with the raw amino-acid sequence, 294 residues long: 4-hydroxy-tetrahydrodipicolinate synthase (294 aa).

Thr-47 serves as a coordination point for pyruvate. Tyr-135 serves as the catalytic Proton donor/acceptor. Residue Lys-163 is the Schiff-base intermediate with substrate of the active site. Val-205 is a pyruvate binding site.

The protein belongs to the DapA family. Homotetramer; dimer of dimers.

The protein localises to the cytoplasm. It catalyses the reaction L-aspartate 4-semialdehyde + pyruvate = (2S,4S)-4-hydroxy-2,3,4,5-tetrahydrodipicolinate + H2O + H(+). It participates in amino-acid biosynthesis; L-lysine biosynthesis via DAP pathway; (S)-tetrahydrodipicolinate from L-aspartate: step 3/4. Functionally, catalyzes the condensation of (S)-aspartate-beta-semialdehyde [(S)-ASA] and pyruvate to 4-hydroxy-tetrahydrodipicolinate (HTPA). The chain is 4-hydroxy-tetrahydrodipicolinate synthase from Rickettsia bellii (strain RML369-C).